A 143-amino-acid chain; its full sequence is Ribosome-binding factor A (143 aa).

The span at 116–128 shows a compositional bias: basic and acidic residues; the sequence is SDDEAKQKQHGDQ. The disordered stretch occupies residues 116–143; that stretch reads SDDEAKQKQHGDQQDVSQSSDDKSEGED.

The protein belongs to the RbfA family. In terms of assembly, monomer. Binds 30S ribosomal subunits, but not 50S ribosomal subunits or 70S ribosomes.

The protein localises to the cytoplasm. In terms of biological role, one of several proteins that assist in the late maturation steps of the functional core of the 30S ribosomal subunit. Associates with free 30S ribosomal subunits (but not with 30S subunits that are part of 70S ribosomes or polysomes). Required for efficient processing of 16S rRNA. May interact with the 5'-terminal helix region of 16S rRNA. The protein is Ribosome-binding factor A of Shewanella sediminis (strain HAW-EB3).